Consider the following 477-residue polypeptide: uncharacterized protein (477 aa).

This is an uncharacterized protein from Aquifex aeolicus (strain VF5).